A 27-amino-acid polypeptide reads, in one-letter code: Carcinustatin-20 (27 aa).

L27 carries the post-translational modification Leucine amide.

The protein belongs to the allatostatin family.

It is found in the secreted. In terms of biological role, may act as a neurotransmitter or neuromodulator. The chain is Carcinustatin-20 from Carcinus maenas (Common shore crab).